We begin with the raw amino-acid sequence, 954 residues long: MAEVSAYKDTLNLLQTPFNMRANAPVREPEIQQFWADRQIYETLSRQNPGAPFVLHDGPPYANGALHMGHALNKTLKDIINKYQLLQGRKVRYVPGWDCHGLPIELKVLQELSSEERRNLTPLTLRQKAKAYALAQVEQQSQSFQRYGVWADWDAPYLTLTPEYEAAQIDVFGQMVLKGYIYRGLKPVHWSPSSRTALAEAELEYPDGHTSRSIYVAMPIVQLSEAAQPLLGNYANLALAIWTTTPWTIPANLAVAVNGELTYAVVQAGDCHLIVAAELAESLSKTFATELTVLATFPGSVLEHSRYRHPLYDRESPVVIGGDYITTESGTGLVHTAPGHGQDDFIVGNRYGLEVFCPVDDKGDFTAAVGDRLVGKNVLKDANAAVIEWLTEVGALLKEESYAHRYPYDWRTKKPTIFRATEQWFASVEGFREQALQAIAEVDWIPAQGENRITSMVSERSDWCISRQRTWGVPIPVFYDEESGEALLNAETIAHVRAIVAERGSDAWWELDVADLLPEPYRSNGRRYRKGTDTMDVWFDSGSSWAAVASQREGLHYPADLYLEGSDQHRGWFQSSLLTSVACNGHAPYRRVLTHGFALDEKGRKMSKSLGNVVDPAIVINGGKDQKQEPPYGADVLRLWVSSVDYSSDVPIGKNILKQMADVYRKIRNTARFLLGNLHDFDPAKDALPWEKLPELDRYLLHRLREVILEIQDAFESFQFFRFFQTVQNFCVVDLSNFYLDIGKDRLYISAPDSLRRRSCQTVLAICVEALATAIAPVLSHMAEDIWQSLPYPARTKSVFQAGWVQLQDDWNQPELAAKWQQLRDLRSEVNKVLEQARRDQAIGSSLEAKLQLWVADSDWRAALADRNPADSLSGTAVDDLRYLFLVSQVELRDQPTGLTEAKYHAQTEDWAIAVVDAEGQKCDRCWNYSTTVGQSSEHPDLCDRCVSALQGTF.

Residues proline 60–histidine 70 carry the 'HIGH' region motif. L-isoleucyl-5'-AMP is bound at residue glutamate 564. Residues lysine 605–serine 609 carry the 'KMSKS' region motif. Lysine 608 serves as a coordination point for ATP. Residues cysteine 923, cysteine 926, cysteine 943, and cysteine 946 each contribute to the Zn(2+) site.

This sequence belongs to the class-I aminoacyl-tRNA synthetase family. IleS type 1 subfamily. In terms of assembly, monomer. Zn(2+) serves as cofactor.

The protein localises to the cytoplasm. The enzyme catalyses tRNA(Ile) + L-isoleucine + ATP = L-isoleucyl-tRNA(Ile) + AMP + diphosphate. Catalyzes the attachment of isoleucine to tRNA(Ile). As IleRS can inadvertently accommodate and process structurally similar amino acids such as valine, to avoid such errors it has two additional distinct tRNA(Ile)-dependent editing activities. One activity is designated as 'pretransfer' editing and involves the hydrolysis of activated Val-AMP. The other activity is designated 'posttransfer' editing and involves deacylation of mischarged Val-tRNA(Ile). The chain is Isoleucine--tRNA ligase from Synechococcus sp. (strain ATCC 27144 / PCC 6301 / SAUG 1402/1) (Anacystis nidulans).